A 547-amino-acid chain; its full sequence is MAAKEVLFGNDARVKMLAGVNILANAVKVTLGPKGRNVVLDKSFGAPLITKDGVSVAKEIELEDKFENMGAQMVKEVASKANDAAGDGTTTATVLAQAIVTEGLKAVAAGMNPMDLKRGIDKAVVAAVAELKNLSQECSDTKAIAQVGTISANSDESIGEIIATAMERVGKEGVITVEEGQALENELDVVEGMQFDRGYLSPYFINKPETGSVELESPFILLVDKKVSNIRELLPILEGLAKTGKPLLIVAEDVEGEALATLVVNNMRGIVKVAAVKAPGFGDRRKAMLQDIAILTGGTVIAEEIGLELEKATLEDLGTAKRVIITKDDTTIIDGNGEETQIKARVAQIKIQAEESTSDYDKEKLQERMAKLAGGVAVIKVGAATEVEMKEKKARVEDALHATRAAVEEGVVAGGGVALVRVASKIGELDVINEDQKHGVIIALRAMEAPLRQIAANAGEEGSVVANNVKNGTGNYGYNAGNDTYGDMLEMGILDPTKVTRSALQFASSIAGLMITTECMVAEVKEDAADMGGMGGMGGMGGMGGMM.

ATP-binding positions include 30–33, K51, 87–91, G415, and D495; these read TLGP and DGTTT.

It belongs to the chaperonin (HSP60) family. Forms a cylinder of 14 subunits composed of two heptameric rings stacked back-to-back. Interacts with the co-chaperonin GroES.

The protein resides in the cytoplasm. The enzyme catalyses ATP + H2O + a folded polypeptide = ADP + phosphate + an unfolded polypeptide.. Together with its co-chaperonin GroES, plays an essential role in assisting protein folding. The GroEL-GroES system forms a nano-cage that allows encapsulation of the non-native substrate proteins and provides a physical environment optimized to promote and accelerate protein folding. This is Chaperonin GroEL from Shewanella pealeana (strain ATCC 700345 / ANG-SQ1).